The chain runs to 302 residues: Acetylglutamate kinase (302 aa).

Substrate contacts are provided by residues 73 to 74 (GG), Arg-95, and Asn-200.

This sequence belongs to the acetylglutamate kinase family. ArgB subfamily.

It is found in the cytoplasm. It catalyses the reaction N-acetyl-L-glutamate + ATP = N-acetyl-L-glutamyl 5-phosphate + ADP. It participates in amino-acid biosynthesis; L-arginine biosynthesis; N(2)-acetyl-L-ornithine from L-glutamate: step 2/4. Functionally, catalyzes the ATP-dependent phosphorylation of N-acetyl-L-glutamate. The sequence is that of Acetylglutamate kinase from Sphingopyxis alaskensis (strain DSM 13593 / LMG 18877 / RB2256) (Sphingomonas alaskensis).